We begin with the raw amino-acid sequence, 376 residues long: WD repeat-containing protein wdr-5.1 (376 aa).

The segment covering 1-24 has biased composition (polar residues); it reads MDTSENAASAAEQQPTQQIDQLTV. The tract at residues 1–70 is disordered; the sequence is MDTSENAASA…TPNPNAAGAS (70 aa). Low complexity predominate over residues 25 to 53; sequence PNAPDGGSSAPAPSTSPNSISPSNPTGTP. WD repeat units lie at residues 85-115, 127-157, 169-199, 211-241, 254-284, 296-329, and 341-373; these read GHTK…KIWN, GHKL…KIFE, GHNN…RIWD, AHSD…RIWD, DENP…KLWD, GHEN…YIWN, and GHTQ…HIWR.

Belongs to the WD repeat WDR5/wds family. Component of the SET2 complex (also known as the SET1/COMPASS complex), which contains at least set-2, swd-2.1, cfp-1, rbbp-5, wdr-5.1, dpy-30 and ash-2. Within the complex, interacts with cfp-1, ash-2, dpy-30 and hda-1. Interacts with histone H3 both unmethylated and methylated at 'Lys-4'. Interacts with jmjd-3.1, ceh-6, sox-2, sem-4 and egl-27. Interacts with set-2. As to expression, enriched in the germline. Detected in all nuclei of the embryo. In larvae, expression is detected in the nuclei of seam cells, somatic gonad precursor cells Z1 and Z4, vulval precursor cells, distal tip cells, hypodermal cells, intestinal and muscle cells. Also detected in the neurons from the ventral nerve cord, head and tail region. Expressed in the head and tail region, intestinal cells, muscle cells, cells of the vulva, spermatheca and sheath cells in adults.

It is found in the nucleus. Functionally, contributes to histone modification. May position the N-terminus of histone H3 for efficient trimethylation at 'Lys-4'. Required for di- and trimethylation, particularly for the trimethylation at 'Lys-4' of histone H3. Not required for demethylation of histone H3 'Lys-27'. H3 'Lys-4' methylation represents a specific tag for epigenetic transcriptional activation, germline establishment, maintenance and function. Implicated in the epigenetic inheritance of lifespan over several generations. Acts in the germline to limit the longevity of the soma, probably by regulating a lipid metabolism pathway that signals from the germline to the intestine, thereby preventing accumulation of mono-unsaturated fatty acids. Required for RNA interference with probable antagonistic role against hpl-2 function. Plays a role in vulval cell fate specification by acting in the synthetic multivulva pathway independent of set-2. Sex determining protein required in the germline to promote the spermatogenesis to oogenesis switch during the late larval stages of development. Acts with the sex determining factor tra-1, and redundantly with wdr-5.2, to regulate fog-3 expression, which in turn determines germ cell fate. Cooperates with jmjd-3.1, egl-27 and unc-3 to ensure robust transdifferentiation of the Y rectal cell to the PDA motor neuron during larval development. This Caenorhabditis elegans protein is WD repeat-containing protein wdr-5.1 (wdr-5.1).